Reading from the N-terminus, the 280-residue chain is Dual adapter for phosphotyrosine and 3-phosphotyrosine and 3-phosphoinositide (280 aa).

The region spanning 35 to 129 (WYHGNLTRHA…GTLMVLKHPY (95 aa)) is the SH2 domain. Tyr139 bears the Phosphotyrosine mark. At Ser141 the chain carries Phosphoserine. The region spanning 164–259 (LGTKEGYLTK…WIKILRWKLS (96 aa)) is the PH domain.

As to quaternary structure, interacts with PtdIns(3,4,5)P3 and PLCG2. Post-translationally, phosphorylated on tyrosine residues.

It localises to the cytoplasm. It is found in the membrane. Its function is as follows. May act as a B-cell-associated adapter that regulates B-cell antigen receptor (BCR)-signaling downstream of PI3K. This chain is Dual adapter for phosphotyrosine and 3-phosphotyrosine and 3-phosphoinositide (Dapp1), found in Mus musculus (Mouse).